The primary structure comprises 397 residues: Cytoplasmic tRNA 2-thiolation protein 2 (397 aa).

The protein belongs to the CTU2/NCS2 family.

It is found in the cytoplasm. The protein operates within tRNA modification; 5-methoxycarbonylmethyl-2-thiouridine-tRNA biosynthesis. Plays a central role in 2-thiolation of mcm(5)S(2)U at tRNA wobble positions of tRNA(Lys), tRNA(Glu) and tRNA(Gln). May act by forming a heterodimer with NCS6/CTU1 that ligates sulfur from thiocarboxylated URM1 onto the uridine of tRNAs at wobble position. The polypeptide is Cytoplasmic tRNA 2-thiolation protein 2 (Drosophila grimshawi (Hawaiian fruit fly)).